Consider the following 175-residue polypeptide: Large ribosomal subunit protein uL10 (175 aa).

This sequence belongs to the universal ribosomal protein uL10 family. As to quaternary structure, part of the ribosomal stalk of the 50S ribosomal subunit. The N-terminus interacts with L11 and the large rRNA to form the base of the stalk. The C-terminus forms an elongated spine to which L12 dimers bind in a sequential fashion forming a multimeric L10(L12)X complex.

Functionally, forms part of the ribosomal stalk, playing a central role in the interaction of the ribosome with GTP-bound translation factors. The sequence is that of Large ribosomal subunit protein uL10 from Prochlorococcus marinus (strain MIT 9313).